The following is a 201-amino-acid chain: Anthranilate synthase component II (201 aa).

The region spanning 3–196 (DILLLDNIDS…LAWAQRKLEP (194 aa)) is the Glutamine amidotransferase type-1 domain. 57 to 59 (GPG) lines the L-glutamine pocket. The active-site Nucleophile; for GATase activity is Cys-84. L-glutamine contacts are provided by residues Gln-88 and 134 to 135 (SL). Residues His-170 and Glu-172 each act as for GATase activity in the active site.

As to quaternary structure, tetramer of two components I and two components II.

It carries out the reaction chorismate + L-glutamine = anthranilate + pyruvate + L-glutamate + H(+). The catalysed reaction is N-(5-phospho-beta-D-ribosyl)anthranilate + diphosphate = 5-phospho-alpha-D-ribose 1-diphosphate + anthranilate. The protein operates within amino-acid biosynthesis; L-tryptophan biosynthesis; L-tryptophan from chorismate: step 1/5. It functions in the pathway amino-acid biosynthesis; L-tryptophan biosynthesis; L-tryptophan from chorismate: step 2/5. This chain is Anthranilate synthase component II (trpG-TRPD), found in Shigella dysenteriae.